A 476-amino-acid polypeptide reads, in one-letter code: Aspartyl/glutamyl-tRNA(Asn/Gln) amidotransferase subunit B (476 aa).

This sequence belongs to the GatB/GatE family. GatB subfamily. In terms of assembly, heterotrimer of A, B and C subunits.

The catalysed reaction is L-glutamyl-tRNA(Gln) + L-glutamine + ATP + H2O = L-glutaminyl-tRNA(Gln) + L-glutamate + ADP + phosphate + H(+). It catalyses the reaction L-aspartyl-tRNA(Asn) + L-glutamine + ATP + H2O = L-asparaginyl-tRNA(Asn) + L-glutamate + ADP + phosphate + 2 H(+). Its function is as follows. Allows the formation of correctly charged Asn-tRNA(Asn) or Gln-tRNA(Gln) through the transamidation of misacylated Asp-tRNA(Asn) or Glu-tRNA(Gln) in organisms which lack either or both of asparaginyl-tRNA or glutaminyl-tRNA synthetases. The reaction takes place in the presence of glutamine and ATP through an activated phospho-Asp-tRNA(Asn) or phospho-Glu-tRNA(Gln). The chain is Aspartyl/glutamyl-tRNA(Asn/Gln) amidotransferase subunit B from Clostridium botulinum (strain Okra / Type B1).